Reading from the N-terminus, the 486-residue chain is Ribosomal RNA small subunit methyltransferase F (486 aa).

Residues 124–130, glutamate 148, aspartate 175, and aspartate 193 contribute to the S-adenosyl-L-methionine site; that span reads ASAPGSK. Cysteine 246 acts as the Nucleophile in catalysis.

This sequence belongs to the class I-like SAM-binding methyltransferase superfamily. RsmB/NOP family.

It is found in the cytoplasm. The catalysed reaction is cytidine(1407) in 16S rRNA + S-adenosyl-L-methionine = 5-methylcytidine(1407) in 16S rRNA + S-adenosyl-L-homocysteine + H(+). Functionally, specifically methylates the cytosine at position 1407 (m5C1407) of 16S rRNA. This Shewanella baltica (strain OS185) protein is Ribosomal RNA small subunit methyltransferase F.